Consider the following 225-residue polypeptide: uncharacterized protein (225 aa).

Belongs to the mimivirus L31/R44 family.

This is an uncharacterized protein from Acanthamoeba polyphaga (Amoeba).